The following is a 635-amino-acid chain: Threonine--tRNA ligase (635 aa).

One can recognise a TGS domain in the interval 1 to 61; sequence MIAITLPDGS…EQNVDLAIVT (61 aa). The catalytic stretch occupies residues 242-533; that stretch reads DHRKLGKLLD…LLENHAGALP (292 aa). Zn(2+)-binding residues include cysteine 333, histidine 384, and histidine 510.

This sequence belongs to the class-II aminoacyl-tRNA synthetase family. As to quaternary structure, homodimer. The cofactor is Zn(2+).

The protein resides in the cytoplasm. It carries out the reaction tRNA(Thr) + L-threonine + ATP = L-threonyl-tRNA(Thr) + AMP + diphosphate + H(+). Functionally, catalyzes the attachment of threonine to tRNA(Thr) in a two-step reaction: L-threonine is first activated by ATP to form Thr-AMP and then transferred to the acceptor end of tRNA(Thr). Also edits incorrectly charged L-seryl-tRNA(Thr). In Ralstonia nicotianae (strain ATCC BAA-1114 / GMI1000) (Ralstonia solanacearum), this protein is Threonine--tRNA ligase.